The chain runs to 463 residues: Chromosomal replication initiator protein DnaA (463 aa).

Residues Met1–Ile84 are domain I, interacts with DnaA modulators. The interval Ile84–Ser124 is domain II. The domain III, AAA+ region stretch occupies residues Thr125 to Ser343. 4 residues coordinate ATP: Gly171, Gly173, Lys174, and Thr175. The tract at residues Asn344–Asn463 is domain IV, binds dsDNA.

The protein belongs to the DnaA family. Oligomerizes as a right-handed, spiral filament on DNA at oriC.

Its subcellular location is the cytoplasm. Plays an essential role in the initiation and regulation of chromosomal replication. ATP-DnaA binds to the origin of replication (oriC) to initiate formation of the DNA replication initiation complex once per cell cycle. Binds the DnaA box (a 9 base pair repeat at the origin) and separates the double-stranded (ds)DNA. Forms a right-handed helical filament on oriC DNA; dsDNA binds to the exterior of the filament while single-stranded (ss)DNA is stabiized in the filament's interior. The ATP-DnaA-oriC complex binds and stabilizes one strand of the AT-rich DNA unwinding element (DUE), permitting loading of DNA polymerase. After initiation quickly degrades to an ADP-DnaA complex that is not apt for DNA replication. Binds acidic phospholipids. In Rickettsia bellii (strain OSU 85-389), this protein is Chromosomal replication initiator protein DnaA.